Reading from the N-terminus, the 425-residue chain is WD repeat-containing protein JIP5 (425 aa).

WD repeat units lie at residues glutamine 9 to serine 48, arginine 71 to lysine 110, leucine 117 to alanine 158, glutamate 219 to glutamate 262, and leucine 321 to glutamate 358. The disordered stretch occupies residues glutamine 354–alanine 425. Acidic residues-rich tracts occupy residues valine 356–alanine 368 and serine 378–glutamate 396. The span at glutamine 399–lysine 414 shows a compositional bias: basic residues.

Belongs to the WD repeat WDR55 family.

The protein resides in the nucleus. Its subcellular location is the nucleolus. The chain is WD repeat-containing protein JIP5 (JIP5) from Phaeosphaeria nodorum (strain SN15 / ATCC MYA-4574 / FGSC 10173) (Glume blotch fungus).